We begin with the raw amino-acid sequence, 305 residues long: Coiled-coil domain-containing protein 69 (305 aa).

A lipid anchor (N-myristoyl glycine) is attached at glycine 2. A disordered region spans residues 13 to 41 (LRKKKRQKAHQEGLTSKELNDLNAKSQEP). Coiled coils occupy residues 42–167 (NELL…SVLS) and 216–278 (MERN…KEQN).

Belongs to the CCDC69 family.

The protein resides in the cytoplasm. The protein localises to the cytoskeleton. It is found in the spindle. It localises to the midbody. Functionally, may act as a scaffold to regulate the recruitment and assembly of spindle midzone components. The chain is Coiled-coil domain-containing protein 69 (ccdc69) from Xenopus tropicalis (Western clawed frog).